Here is an 857-residue protein sequence, read N- to C-terminus: Bifunctional levopimaradiene synthase, chloroplastic (857 aa).

The N-terminal 33 residues, 1-33 (MALPSSSLSSQIHTGATTQCIPHFHGSLNAGTS), are a transit peptide targeting the chloroplast. Lys-257 serves as a coordination point for substrate. Residues Asp-390 and Asp-392 each contribute to the Mg(2+) site. A DXDD motif motif is present at residues 390 to 393 (DIDD). Lys-477 is a substrate binding site. Mg(2+) contacts are provided by Asp-609, Asp-613, Asn-753, Thr-757, and Glu-761. Positions 609 to 613 (DDLYD) match the DDXXD motif motif.

This sequence belongs to the terpene synthase family. Tpsd subfamily. Mg(2+) serves as cofactor.

The protein resides in the plastid. It is found in the chloroplast. It carries out the reaction (2E,6E,10E)-geranylgeranyl diphosphate = (+)-copalyl diphosphate. It catalyses the reaction (+)-copalyl diphosphate = abieta-7,13-diene + diphosphate. The catalysed reaction is (+)-copalyl diphosphate = abieta-8(14),12-diene + diphosphate. The enzyme catalyses (+)-copalyl diphosphate = neoabietadiene + diphosphate. Its pathway is terpene metabolism; oleoresin biosynthesis. Involved in defensive oleoresin formation in conifers in response to insect attack or other injury. Involved in diterpene (C20) olefins biosynthesis. Bifunctional enzyme that catalyzes two sequential cyclizations of geranylgeranyl diphosphate (GGPP) to levopimaradiene. Levopimaradiene is the major products of the enzyme with abietadiene and neoabietadiene. No activity with farnesyl diphosphate (FPP) as substrate. This is Bifunctional levopimaradiene synthase, chloroplastic from Pinus banksiana (Jack pine).